Consider the following 184-residue polypeptide: MKQLLEFIPLILFFAVYKLVGIREAAITLIIATLIQLLILKIKYGKVEKQQLFMGIAVVFFGTLTAYFNQLEYLKWKVTIVYAIFALVLLVSQYGFNKNLIKLMLGKEDALELPEQVWNRLNLGWALFFLLCMLINLYISQYLSDDLWVDFKTFGILGMTLIATIITGIYIYRYLPQTKSNNKE.

5 helical membrane passes run 19–39 (LVGI…QLLI), 52–72 (LFMG…NQLE), 76–96 (WKVT…QYGF), 123–143 (LGWA…SQYL), and 151–171 (FKTF…GIYI).

The protein belongs to the YciB family.

It is found in the cell inner membrane. In terms of biological role, plays a role in cell envelope biogenesis, maintenance of cell envelope integrity and membrane homeostasis. This chain is Inner membrane-spanning protein YciB, found in Pasteurella multocida (strain Pm70).